The following is a 217-amino-acid chain: Nitrile hydratase subunit beta (217 aa).

This sequence belongs to the nitrile hydratase subunit beta family. As to quaternary structure, heterodimer of an alpha and a beta chain.

It carries out the reaction an aliphatic primary amide = an aliphatic nitrile + H2O. NHase catalyzes the hydration of various nitrile compounds to the corresponding amides. In Pseudomonas putida (Arthrobacter siderocapsulatus), this protein is Nitrile hydratase subunit beta (nthB).